The chain runs to 243 residues: Carboxy-S-adenosyl-L-methionine synthase (243 aa).

S-adenosyl-L-methionine is bound by residues Tyr39, 64–66 (GCS), 89–90 (DN), 117–118 (DL), Asn132, and Arg199.

The protein belongs to the class I-like SAM-binding methyltransferase superfamily. Cx-SAM synthase family. Homodimer.

The catalysed reaction is prephenate + S-adenosyl-L-methionine = carboxy-S-adenosyl-L-methionine + 3-phenylpyruvate + H2O. Catalyzes the conversion of S-adenosyl-L-methionine (SAM) to carboxy-S-adenosyl-L-methionine (Cx-SAM). The chain is Carboxy-S-adenosyl-L-methionine synthase from Pseudoalteromonas atlantica (strain T6c / ATCC BAA-1087).